The primary structure comprises 141 residues: ATP synthase epsilon chain (141 aa).

This sequence belongs to the ATPase epsilon chain family. In terms of assembly, F-type ATPases have 2 components, CF(1) - the catalytic core - and CF(0) - the membrane proton channel. CF(1) has five subunits: alpha(3), beta(3), gamma(1), delta(1), epsilon(1). CF(0) has three main subunits: a, b and c.

It localises to the cell membrane. Produces ATP from ADP in the presence of a proton gradient across the membrane. In Mycoplasmopsis pulmonis (strain UAB CTIP) (Mycoplasma pulmonis), this protein is ATP synthase epsilon chain (atpC).